The following is a 399-amino-acid chain: S-adenosylmethionine synthase (399 aa).

Residue His-16 coordinates ATP. Residue Asp-18 coordinates Mg(2+). Residue Glu-44 participates in K(+) binding. Positions 57 and 100 each coordinate L-methionine. Residues 100-110 (QSPDIAQGVDT) are flexible loop. ATP is bound by residues 175-177 (DGK), 246-247 (KF), Asp-255, 261-262 (RK), Ala-278, and Lys-282. Position 255 (Asp-255) interacts with L-methionine. Residue Lys-286 participates in L-methionine binding. An Isoglutamyl lysine isopeptide (Lys-Gln) (interchain with Q-Cter in protein Pup) cross-link involves residue Lys-341.

Belongs to the AdoMet synthase family. In terms of assembly, homotetramer; dimer of dimers. Requires Mg(2+) as cofactor. K(+) serves as cofactor.

It is found in the cytoplasm. It catalyses the reaction L-methionine + ATP + H2O = S-adenosyl-L-methionine + phosphate + diphosphate. Its pathway is amino-acid biosynthesis; S-adenosyl-L-methionine biosynthesis; S-adenosyl-L-methionine from L-methionine: step 1/1. Catalyzes the formation of S-adenosylmethionine (AdoMet) from methionine and ATP. The overall synthetic reaction is composed of two sequential steps, AdoMet formation and the subsequent tripolyphosphate hydrolysis which occurs prior to release of AdoMet from the enzyme. The protein is S-adenosylmethionine synthase of Mycolicibacterium smegmatis (strain ATCC 700084 / mc(2)155) (Mycobacterium smegmatis).